The following is a 269-amino-acid chain: Ribosomal RNA small subunit methyltransferase J (269 aa).

Residues 125–126 (ER) and Asp-179 contribute to the S-adenosyl-L-methionine site.

Belongs to the methyltransferase superfamily. RsmJ family.

The protein resides in the cytoplasm. The enzyme catalyses guanosine(1516) in 16S rRNA + S-adenosyl-L-methionine = N(2)-methylguanosine(1516) in 16S rRNA + S-adenosyl-L-homocysteine + H(+). Specifically methylates the guanosine in position 1516 of 16S rRNA. This is Ribosomal RNA small subunit methyltransferase J from Pseudomonas syringae pv. tomato (strain ATCC BAA-871 / DC3000).